The sequence spans 295 residues: Iodotyrosine deiodinase (295 aa).

The helical transmembrane segment at 3–23 (VFSSLTPVFVAVLCVIIGFLF) threads the bilayer. The interval 29-81 (KESRSKQKPSDQTARPWVDEDLQDDTEISTKDNEENNEDWMDTTDEENLPHVP) is disordered. The span at 63-75 (ENNEDWMDTTDEE) shows a compositional bias: acidic residues. FMN contacts are provided by residues 106 to 110 (RRSVR), S134, and 134 to 135 (SG). A136, E163, Y167, and K188 together coordinate 3-iodo-L-tyrosine. FMN-binding positions include 243–245 (TTT) and R285.

The protein belongs to the nitroreductase family. FMN serves as cofactor.

The protein resides in the membrane. The enzyme catalyses 2 iodide + L-tyrosine + 2 NADP(+) = 3,5-diiodo-L-tyrosine + 2 NADPH + H(+). It carries out the reaction iodide + L-tyrosine + NADP(+) = 3-iodo-L-tyrosine + NADPH. It catalyses the reaction 3-iodo-L-tyrosine + iodide + NADP(+) = 3,5-diiodo-L-tyrosine + NADPH + H(+). The catalysed reaction is L-tyrosine + chloride + NADP(+) = 3-chloro-L-tyrosine + NADPH. The enzyme catalyses bromide + L-tyrosine + NADP(+) = 3-bromo-L-tyrosine + NADPH. Functionally, catalyzes the dehalogenation of halotyrosines such as 3,5-diiodo-L-tyrosine. Likely to also catalyze the dehalogenation of other halotyrosines such as 3-bromo-L-tyrosine, 3-chloro-L-tyrosine and 3-iodo-L-tyrosine. The sequence is that of Iodotyrosine deiodinase (iyd) from Danio rerio (Zebrafish).